The sequence spans 1067 residues: Lon protease homolog, mitochondrial (1067 aa).

A mitochondrion-targeting transit peptide spans 1–36 (MITRLSGACLRRSGAKRNWPREHLVHRSLLASFSTT). Residues 55–82 (KSKEPKDNKPLDNKNDPKKTHNEDESHT) are compositionally biased toward basic and acidic residues. Disordered stretches follow at residues 55–142 (KSKE…MPLN) and 262–314 (IPPK…ESTP). A compositionally biased stretch (acidic residues) spans 128–139 (FELGGEENEDEM). A Lon N-terminal domain is found at 162–425 (LLALPIARRP…KALYVLKKEL (264 aa)). Over residues 293-311 (VKSDLKQDNGKEEPEKEVE) the composition is skewed to basic and acidic residues. Residue 578-585 (GPPGVGKT) participates in ATP binding. Residues 791–820 (NSKEKSTGKSGKKTSPQSSEDAANKEASSV) form a disordered region. A Lon proteolytic domain is found at 854–1040 (TTPPGVVMGL…DDVFKRVFSN (187 aa)). Active-site residues include Ser-946 and Lys-989.

It belongs to the peptidase S16 family. In terms of assembly, homohexamer or homoheptamer. Organized in a ring with a central cavity.

It localises to the mitochondrion matrix. It catalyses the reaction Hydrolysis of proteins in presence of ATP.. ATP-dependent serine protease that mediates the selective degradation of misfolded, unassembled or oxidatively damaged polypeptides as well as certain short-lived regulatory proteins in the mitochondrial matrix. May also have a chaperone function in the assembly of inner membrane protein complexes. Participates in the regulation of mitochondrial gene expression and in the maintenance of the integrity of the mitochondrial genome. Binds to mitochondrial DNA in a site-specific manner. This is Lon protease homolog, mitochondrial (pim1) from Schizosaccharomyces pombe (strain 972 / ATCC 24843) (Fission yeast).